Reading from the N-terminus, the 389-residue chain is Major outer membrane porin (389 aa).

Belongs to the chlamydial porin (CP) (TC 1.B.2) family. As to quaternary structure, part of a disulfide cross-linked outer membrane complex (COMC) composed of the major outer membrane porin (MOMP), the small cysteine-rich protein (OmcA) and the large cysteine-rich periplasmic protein (OmcB).

It is found in the cell outer membrane. Its function is as follows. In elementary bodies (EBs, the infectious stage, which is able to survive outside the host cell) provides the structural integrity of the outer envelope through disulfide cross-links with the small cysteine-rich protein and the large cysteine-rich periplasmic protein. It has been described in publications as the Sarkosyl-insoluble COMC (Chlamydia outer membrane complex), and serves as the functional equivalent of peptidoglycan. Permits diffusion of specific solutes through the outer membrane. The sequence is that of Major outer membrane porin (ompA) from Chlamydia pneumoniae (Chlamydophila pneumoniae).